The following is a 116-amino-acid chain: FK506-binding protein 1 (116 aa).

One can recognise a PPIase FKBP-type domain in the interval 19-116; the sequence is GDKVSIHYTG…IFEVELLKIN (98 aa).

It belongs to the FKBP-type PPIase family. FKBP1 subfamily.

It is found in the cytoplasm. The enzyme catalyses [protein]-peptidylproline (omega=180) = [protein]-peptidylproline (omega=0). Inhibited by both FK506 and rapamycin. Functionally, PPIases accelerate the folding of proteins. It catalyzes the cis-trans isomerization of proline imidic peptide bonds in oligopeptides. The protein is FK506-binding protein 1 (fpr1) of Aspergillus oryzae (strain ATCC 42149 / RIB 40) (Yellow koji mold).